Here is a 637-residue protein sequence, read N- to C-terminus: Chaperone protein HtpG (637 aa).

Residues 1–328 form an a; substrate-binding region; sequence MADIEELKFD…SSDLPLNISR (328 aa). Residues 329–556 are b; it reads ETLQNNRIVE…DNSMDIRMER (228 aa). A disordered region spans residues 488 to 508; the sequence is IGASDDSGDKTSEDSGESASD. Basic and acidic residues predominate over residues 494–508; that stretch reads SGDKTSEDSGESASD. The c stretch occupies residues 557-637; that stretch reads FLREQKQLNY…GVLAKIFSSK (81 aa).

It belongs to the heat shock protein 90 family. In terms of assembly, homodimer.

The protein localises to the cytoplasm. Molecular chaperone. Has ATPase activity. This Anaplasma phagocytophilum (strain HZ) protein is Chaperone protein HtpG.